A 1460-amino-acid chain; its full sequence is Nonribosomal peptide synthetase 6 (1460 aa).

The adenylation stretch occupies residues 63–468 (EQAALHPEKI…GRQDQQVKLR (406 aa)). The Carrier 1 domain maps to 600–675 (EPTTEMEIKL…AMATKIKPLS (76 aa)). Serine 636 is subject to O-(pantetheine 4'-phosphoryl)serine. The condensation stretch occupies residues 712–1135 (VQDVYPCTPL…AVLDPSEAQD (424 aa)). Carrier domains are found at residues 1168–1241 (SPNE…GNEK) and 1236–1312 (SIGN…EETD). 2 positions are modified to O-(pantetheine 4'-phosphoryl)serine: serine 1202 and serine 1273. The segment at 1303 to 1324 (ELASSAEETDSPQTETNSNAPY) is disordered. Polar residues predominate over residues 1313 to 1322 (SPQTETNSNA).

It belongs to the NRP synthetase family.

Its pathway is siderophore biosynthesis. Its function is as follows. NRPS involved in extracellular coprogen-type siderophores biosynthesis. The role of extracellular siderophores in fungal virulence to plants is to supply iron to the fungus during plant infection, but not to act as phytotoxins, depriving their hosts of iron. The polypeptide is Nonribosomal peptide synthetase 6 (Alternaria brassicicola (Dark leaf spot agent)).